The primary structure comprises 155 residues: MFTIDFSDHTGLVKDAWYKQIEDLLEFAKKEEHIEDDAELSVTFVDKQEIQEINRTYRDKDKVTDVISFALEEDEPDIDFSGLDIPRVLGDIIICTDVAQEQANNYGHSFERELGFLALHGFLHLLGYDHMTEADEKEMFGRQDTILNAYGLTRD.

Residues H120, H124, and H130 each coordinate Zn(2+).

It belongs to the endoribonuclease YbeY family. Zn(2+) is required as a cofactor.

It is found in the cytoplasm. Single strand-specific metallo-endoribonuclease involved in late-stage 70S ribosome quality control and in maturation of the 3' terminus of the 16S rRNA. The sequence is that of Endoribonuclease YbeY from Staphylococcus aureus (strain bovine RF122 / ET3-1).